The chain runs to 141 residues: Protein GAT3 (141 aa).

A GATA-type zinc finger spans residues 72–98 (CPQCAVIKTSPQWREGPDGEVTLCNAC).

This is Protein GAT3 (GAT3) from Saccharomyces cerevisiae (strain ATCC 204508 / S288c) (Baker's yeast).